Here is a 904-residue protein sequence, read N- to C-terminus: Phosphoenolpyruvate carboxylase (904 aa).

A disordered region spans residues I52–R71. Active-site residues include H151 and K570.

Belongs to the PEPCase type 1 family. Mg(2+) serves as cofactor.

It catalyses the reaction oxaloacetate + phosphate = phosphoenolpyruvate + hydrogencarbonate. Functionally, forms oxaloacetate, a four-carbon dicarboxylic acid source for the tricarboxylic acid cycle. The chain is Phosphoenolpyruvate carboxylase from Xanthomonas oryzae pv. oryzae (strain MAFF 311018).